The following is a 693-amino-acid chain: Elongation factor G 1 (693 aa).

Residues 4–281 (NKLRNIGISA…AVTRFLPSPH (278 aa)) enclose the tr-type G domain. Residues 13 to 20 (AHIDSGKT), 80 to 84 (DTPGH), and 134 to 137 (NKCD) contribute to the GTP site.

The protein belongs to the TRAFAC class translation factor GTPase superfamily. Classic translation factor GTPase family. EF-G/EF-2 subfamily.

The protein localises to the cytoplasm. Its function is as follows. Catalyzes the GTP-dependent ribosomal translocation step during translation elongation. During this step, the ribosome changes from the pre-translocational (PRE) to the post-translocational (POST) state as the newly formed A-site-bound peptidyl-tRNA and P-site-bound deacylated tRNA move to the P and E sites, respectively. Catalyzes the coordinated movement of the two tRNA molecules, the mRNA and conformational changes in the ribosome. The polypeptide is Elongation factor G 1 (Borreliella afzelii (strain PKo) (Borrelia afzelii)).